An 84-amino-acid polypeptide reads, in one-letter code: Small ribosomal subunit protein uS17 (84 aa).

This sequence belongs to the universal ribosomal protein uS17 family. In terms of assembly, part of the 30S ribosomal subunit.

Functionally, one of the primary rRNA binding proteins, it binds specifically to the 5'-end of 16S ribosomal RNA. In Borrelia hermsii (strain HS1 / DAH), this protein is Small ribosomal subunit protein uS17.